The following is a 469-amino-acid chain: Sorting and assembly machinery component 50 homolog (469 aa).

The POTRA domain maps to 45–125 (VVVQHVHFDG…LDVTFEVTEL (81 aa)). At lysine 255 the chain carries N6-methyllysine.

This sequence belongs to the SAM50/omp85 family. As to quaternary structure, associates with the mitochondrial contact site and cristae organizing system (MICOS) complex, composed of at least MICOS10/MIC10, CHCHD3/MIC19, CHCHD6/MIC25, APOOL/MIC27, IMMT/MIC60, APOO/MIC23/MIC26 and QIL1/MIC13. This complex was also known under the names MINOS or MitOS complex. The MICOS complex associates with mitochondrial outer membrane proteins SAMM50, MTX1 and MTX2 (together described as components of the mitochondrial outer membrane sorting assembly machinery (SAM) complex) and DNAJC11, mitochondrial inner membrane protein TMEM11 and with HSPA9. The MICOS and SAM complexes together with DNAJC11 are part of a large protein complex spanning both membranes termed the mitochondrial intermembrane space bridging (MIB) complex. Interacts with IMMT/MIC60. Interacts with CHCHD3/MIC19. Interacts with ARMC1. In terms of assembly, (Microbial infection) Interacts with parasite T.gondii RH strain MAF1b1; the interaction is probably indirect and results in the disruption of the MIB complex and the formation of SPOTs (structures positive for outer mitochondrial membrane (OMM)), a cellular response to OMM stress, which leads to the constitutive shedding of OMM vesicles.

It localises to the mitochondrion outer membrane. The protein localises to the cytoplasm. The protein resides in the mitochondrion. Its function is as follows. Plays a crucial role in the maintenance of the structure of mitochondrial cristae and the proper assembly of the mitochondrial respiratory chain complexes. Required for the assembly of TOMM40 into the TOM complex. The polypeptide is Sorting and assembly machinery component 50 homolog (Samm50) (Mus musculus (Mouse)).